A 171-amino-acid chain; its full sequence is CDP-archaeol synthase (171 aa).

Helical transmembrane passes span 7–27, 54–74, 84–104, 115–135, and 141–161; these read IFWAFWYILPAYFANASPVLV, GFIGGVLIGTLVGIVQYFITP, VKLAFLLSFGALIGDLVGSFI, PAIGLDQLGFLISALAFAYPV, and GQIIFLLVVSPFIHWGANYFA.

This sequence belongs to the CDP-archaeol synthase family. Requires Mg(2+) as cofactor.

It is found in the cell membrane. The catalysed reaction is 2,3-bis-O-(geranylgeranyl)-sn-glycerol 1-phosphate + CTP + H(+) = CDP-2,3-bis-O-(geranylgeranyl)-sn-glycerol + diphosphate. Its pathway is membrane lipid metabolism; glycerophospholipid metabolism. Catalyzes the formation of CDP-2,3-bis-(O-geranylgeranyl)-sn-glycerol (CDP-archaeol) from 2,3-bis-(O-geranylgeranyl)-sn-glycerol 1-phosphate (DGGGP) and CTP. This reaction is the third ether-bond-formation step in the biosynthesis of archaeal membrane lipids. In Thermococcus kodakarensis (strain ATCC BAA-918 / JCM 12380 / KOD1) (Pyrococcus kodakaraensis (strain KOD1)), this protein is CDP-archaeol synthase.